A 625-amino-acid chain; its full sequence is ATP-binding cassette sub-family F member 2 (625 aa).

The segment at 1 to 54 (MPSDLAKKKAAKKKEAAKARQRPRKGHEENGDAITEPQVAEERNEEANGRETTE) is disordered. The span at 40-54 (AEERNEEANGRETTE) shows a compositional bias: basic and acidic residues. ABC transporter domains follow at residues 88–327 (AHII…ENQM) and 398–615 (IMVQ…VGEE). An ATP-binding site is contributed by 120 to 127 (GLNGIGKS). Phosphothreonine is present on Thr220. N6-acetyllysine is present on Lys306. ATP is bound at residue 432-439 (GPNGAGKS). Ser514 carries the post-translational modification Phosphoserine.

It belongs to the ABC transporter superfamily. ABCF family. EF3 subfamily.

In Bos taurus (Bovine), this protein is ATP-binding cassette sub-family F member 2 (ABCF2).